The sequence spans 347 residues: S-adenosylmethionine:tRNA ribosyltransferase-isomerase (347 aa).

Belongs to the QueA family. Monomer.

It localises to the cytoplasm. It catalyses the reaction 7-aminomethyl-7-carbaguanosine(34) in tRNA + S-adenosyl-L-methionine = epoxyqueuosine(34) in tRNA + adenine + L-methionine + 2 H(+). It functions in the pathway tRNA modification; tRNA-queuosine biosynthesis. Its function is as follows. Transfers and isomerizes the ribose moiety from AdoMet to the 7-aminomethyl group of 7-deazaguanine (preQ1-tRNA) to give epoxyqueuosine (oQ-tRNA). This chain is S-adenosylmethionine:tRNA ribosyltransferase-isomerase, found in Bordetella parapertussis (strain 12822 / ATCC BAA-587 / NCTC 13253).